The sequence spans 200 residues: Adenylyl-sulfate kinase (200 aa).

36–43 (GLSGSGKS) contacts ATP. Ser-110 functions as the Phosphoserine intermediate in the catalytic mechanism.

This sequence belongs to the APS kinase family.

The catalysed reaction is adenosine 5'-phosphosulfate + ATP = 3'-phosphoadenylyl sulfate + ADP + H(+). Its pathway is sulfur metabolism; hydrogen sulfide biosynthesis; sulfite from sulfate: step 2/3. In terms of biological role, catalyzes the synthesis of activated sulfate. This Clostridium acetobutylicum (strain ATCC 824 / DSM 792 / JCM 1419 / IAM 19013 / LMG 5710 / NBRC 13948 / NRRL B-527 / VKM B-1787 / 2291 / W) protein is Adenylyl-sulfate kinase.